The following is a 237-amino-acid chain: MSAPASTTQATGSTTSTTTKTAGATPATASGLFTIPDGDFFSTARAIVASNAVATNEDLSKIEAIWKDMKVPTDTMAQAAWDLVRHCADVGSSAQTEMIDTGPYSNGISRARLAAAIKEVCTLRQFCMKYAPVVWNWMLTNNSPPANWQAQGFKPEHKFAAFDFFNGVTNPAAIMPKEGLIRPPSEAEMNAAQTAAFVKITKARAQSNDFASLDAAVTRGRITGTTTAEAVVTLPPP.

Residues methionine 1 to alanine 24 are disordered.

It belongs to the potexvirus capsid protein family.

The protein localises to the virion. In terms of biological role, required for genome encapsidation. Forms ribonucleoprotein complexes along with TGB1 helicase and viral RNA. This is Coat protein from Brassica campestris (Field mustard).